The sequence spans 130 residues: uncharacterized protein (130 aa).

Residues 1–58 lie on the Cytoplasmic side of the membrane; sequence MREQLKLFTREIVDFTFLILSGFDYYQTLLISSNSSKKRPKDSSLLSEKKKKKKKKKK. Residues 34–57 are disordered; that stretch reads NSSKKRPKDSSLLSEKKKKKKKKK. A helical membrane pass occupies residues 59–79; that stretch reads DVLSYLSYLKDLPFVPFLFWQ. Residues 80-94 are Extracellular-facing; the sequence is PGYSQREKNPRQHSL. Residues 95-115 form a helical membrane-spanning segment; it reads FIMTITKPGMISMADMNYVVS. Residues 116–130 are Cytoplasmic-facing; the sequence is KNRSLNRPAERGGNR.

The protein localises to the membrane. This is an uncharacterized protein from Saccharomyces cerevisiae (strain ATCC 204508 / S288c) (Baker's yeast).